Reading from the N-terminus, the 141-residue chain is Hemoglobin subunit alpha (141 aa).

Residues 1 to 141 form the Globin domain; it reads VLSAADKTNV…VSTVLTSKYR (141 aa). At serine 3 the chain carries Phosphoserine. Lysine 7 is modified (N6-succinyllysine). A Phosphothreonine modification is found at threonine 8. The residue at position 11 (lysine 11) is an N6-succinyllysine. Lysine 16 carries the N6-acetyllysine; alternate modification. N6-succinyllysine; alternate is present on lysine 16. At tyrosine 24 the chain carries Phosphotyrosine. Serine 35 is subject to Phosphoserine. Lysine 40 is modified (N6-succinyllysine). Serine 49 bears the Phosphoserine mark. Histidine 58 provides a ligand contact to O2. Residue histidine 87 participates in heme b binding. A Phosphoserine modification is found at serine 102. At threonine 108 the chain carries Phosphothreonine. Phosphoserine occurs at positions 124 and 131. Phosphothreonine is present on residues threonine 134 and threonine 137. A Phosphoserine modification is found at serine 138.

It belongs to the globin family. Heterotetramer of two alpha chains and two beta chains. In terms of tissue distribution, red blood cells.

Its function is as follows. Involved in oxygen transport from the lung to the various peripheral tissues. The chain is Hemoglobin subunit alpha from Tamiasciurus hudsonicus (American red squirrel).